We begin with the raw amino-acid sequence, 461 residues long: ATP synthase subunit beta (461 aa).

Residue 151–158 (GGAGVGKT) coordinates ATP.

This sequence belongs to the ATPase alpha/beta chains family. In terms of assembly, F-type ATPases have 2 components, CF(1) - the catalytic core - and CF(0) - the membrane proton channel. CF(1) has five subunits: alpha(3), beta(3), gamma(1), delta(1), epsilon(1). CF(0) has three main subunits: a(1), b(2) and c(9-12). The alpha and beta chains form an alternating ring which encloses part of the gamma chain. CF(1) is attached to CF(0) by a central stalk formed by the gamma and epsilon chains, while a peripheral stalk is formed by the delta and b chains.

The protein resides in the cell inner membrane. It carries out the reaction ATP + H2O + 4 H(+)(in) = ADP + phosphate + 5 H(+)(out). In terms of biological role, produces ATP from ADP in the presence of a proton gradient across the membrane. The catalytic sites are hosted primarily by the beta subunits. This is ATP synthase subunit beta from Coxiella burnetii (strain RSA 331 / Henzerling II).